The primary structure comprises 683 residues: Probable serine/threonine-protein kinase HAL5-like (683 aa).

Disordered stretches follow at residues 1–90 (MPQQ…VSDE) and 157–200 (YPQN…SKKA). A compositionally biased stretch (low complexity) spans 36–48 (PSSAATSDSSEMS). Over residues 50 to 60 (AQGGRGNGLLG) the composition is skewed to gly residues. Polar residues predominate over residues 69–85 (SPKSEAQFTQRNKSAES). The Protein kinase domain occupies 364 to 670 (GKCIGMIGQG…IPKLLDTPWM (307 aa)). Residues 370-378 (IGQGAYGTV) and Lys411 each bind ATP. The active-site Proton acceptor is the Asp521.

This sequence belongs to the protein kinase superfamily. CAMK Ser/Thr protein kinase family. NPR/HAL subfamily. HAL5 sub-subfamily.

It carries out the reaction L-seryl-[protein] + ATP = O-phospho-L-seryl-[protein] + ADP + H(+). The enzyme catalyses L-threonyl-[protein] + ATP = O-phospho-L-threonyl-[protein] + ADP + H(+). This is Probable serine/threonine-protein kinase HAL5-like from Eremothecium gossypii (strain ATCC 10895 / CBS 109.51 / FGSC 9923 / NRRL Y-1056) (Yeast).